Reading from the N-terminus, the 662-residue chain is Glycogen debranching enzyme (662 aa).

Residue aspartate 338 is the Nucleophile of the active site. Glutamate 373 (proton donor) is an active-site residue.

This sequence belongs to the glycosyl hydrolase 13 family.

The enzyme catalyses Hydrolysis of (1-&gt;6)-alpha-D-glucosidic linkages to branches with degrees of polymerization of three or four glucose residues in limit dextrin.. The protein operates within glycan degradation; glycogen degradation. Removes maltotriose and maltotetraose chains that are attached by 1,6-alpha-linkage to the limit dextrin main chain, generating a debranched limit dextrin. This chain is Glycogen debranching enzyme, found in Yersinia enterocolitica serotype O:8 / biotype 1B (strain NCTC 13174 / 8081).